The sequence spans 560 residues: Formate--tetrahydrofolate ligase (560 aa).

69-76 (TPAGEGKS) lines the ATP pocket.

The protein belongs to the formate--tetrahydrofolate ligase family.

It catalyses the reaction (6S)-5,6,7,8-tetrahydrofolate + formate + ATP = (6R)-10-formyltetrahydrofolate + ADP + phosphate. Its pathway is one-carbon metabolism; tetrahydrofolate interconversion. The protein is Formate--tetrahydrofolate ligase of Listeria innocua serovar 6a (strain ATCC BAA-680 / CLIP 11262).